A 631-amino-acid polypeptide reads, in one-letter code: Translation factor GUF1, mitochondrial (631 aa).

A mitochondrion-targeting transit peptide spans 1–19 (MFNRRLLRHVRYAFQQVRS). In terms of domain architecture, tr-type G spans 33-214 (ERYRNFSIVA…AIVDRIPPPT (182 aa)). GTP-binding positions include 42-49 (AHVDHGKS), 107-111 (DTPGH), and 161-164 (NKID).

This sequence belongs to the TRAFAC class translation factor GTPase superfamily. Classic translation factor GTPase family. LepA subfamily.

The protein localises to the mitochondrion inner membrane. It carries out the reaction GTP + H2O = GDP + phosphate + H(+). Promotes mitochondrial protein synthesis. May act as a fidelity factor of the translation reaction, by catalyzing a one-codon backward translocation of tRNAs on improperly translocated ribosomes. Binds to mitochondrial ribosomes in a GTP-dependent manner. This Kluyveromyces lactis (strain ATCC 8585 / CBS 2359 / DSM 70799 / NBRC 1267 / NRRL Y-1140 / WM37) (Yeast) protein is Translation factor GUF1, mitochondrial.